A 518-amino-acid polypeptide reads, in one-letter code: Endoglucanase 18 (518 aa).

The Cytoplasmic portion of the chain corresponds to 1–35 (MANCVRCCCWLLVLMLMALAITAAVVFVRYKNGEG). Residues 36-56 (VFPFPGVPGAVDHKYADALAV) form a helical membrane-spanning segment. Topologically, residues 57 to 518 (ALQFFQVQKS…STSSLARSLS (462 aa)) are extracellular. N71 is a glycosylation site (N-linked (GlcNAc...) asparagine). The active-site Nucleophile is the D101. 3 N-linked (GlcNAc...) asparagine glycosylation sites follow: N214, N251, and N272. Residue H436 is part of the active site. An N-linked (GlcNAc...) asparagine glycan is attached at N477. Active-site residues include D482 and E491.

It belongs to the glycosyl hydrolase 9 (cellulase E) family.

It localises to the membrane. The enzyme catalyses Endohydrolysis of (1-&gt;4)-beta-D-glucosidic linkages in cellulose, lichenin and cereal beta-D-glucans.. This Oryza sativa subsp. japonica (Rice) protein is Endoglucanase 18.